The primary structure comprises 124 residues: MCAVSLTKPVAVVALGGALGASARFLLAELWPGIWTVLLINVVGSLLLGYLAETVGPDRLSRLFLGVGVLGGFTTFSTFAVDAVREDAVTATLYVVATLIPALLAARLGMLAGHRHRLARKAVA.

4 helical membrane passes run 1 to 21 (MCAV…ALGA), 30 to 50 (LWPG…LLGY), 64 to 84 (FLGV…VDAV), and 93 to 113 (LYVV…MLAG). 2 residues coordinate Na(+): Gly71 and Thr74.

It belongs to the fluoride channel Fluc/FEX (TC 1.A.43) family.

The protein localises to the cell membrane. The enzyme catalyses fluoride(in) = fluoride(out). Na(+) is not transported, but it plays an essential structural role and its presence is essential for fluoride channel function. Fluoride-specific ion channel. Important for reducing fluoride concentration in the cell, thus reducing its toxicity. This chain is Fluoride-specific ion channel FluC 1, found in Rhodococcus jostii (strain RHA1).